Consider the following 110-residue polypeptide: Senescence associated gene 20 (110 aa).

In Arabidopsis thaliana (Mouse-ear cress), this protein is Senescence associated gene 20.